We begin with the raw amino-acid sequence, 266 residues long: Undecaprenyl-diphosphatase (266 aa).

The next 8 helical transmembrane spans lie at 4–24 (WLIALILGLIEGLTEFIPVSS), 46–66 (VLIQLGAILAITGVYFGRLWG), 82–102 (IGILLAFLPAVFVGVAAHDFI), 105–125 (VLYETPALVCSTLIIGGFILL), 142–162 (YPLKTAFIIGLFQCLALVPGV), 182–202 (AAEFSFFLAMPTMAGAFAYDL), 216–236 (LIGIGFLAALVSGVFVVKTVL), and 244–264 (FAPFAYWRIAVGVVGLALLYI).

It belongs to the UppP family.

The protein resides in the cell inner membrane. It catalyses the reaction di-trans,octa-cis-undecaprenyl diphosphate + H2O = di-trans,octa-cis-undecaprenyl phosphate + phosphate + H(+). In terms of biological role, catalyzes the dephosphorylation of undecaprenyl diphosphate (UPP). Confers resistance to bacitracin. This is Undecaprenyl-diphosphatase from Caulobacter vibrioides (strain ATCC 19089 / CIP 103742 / CB 15) (Caulobacter crescentus).